A 525-amino-acid chain; its full sequence is Ribonuclease Y (525 aa).

Residues 3 to 23 form a helical membrane-spanning segment; the sequence is IFFISLVLIVLASVVFFVGGF. Residues 215-300 enclose the KH domain; it reads ALSVVHIQSD…KAYEDAKKEI (86 aa). Positions 341–433 constitute an HD domain; that stretch reads LLQHSREVAM…VDAANVISLS (93 aa).

This sequence belongs to the RNase Y family.

The protein resides in the cell membrane. In terms of biological role, endoribonuclease that initiates mRNA decay. The protein is Ribonuclease Y of Chlorobium phaeobacteroides (strain DSM 266 / SMG 266 / 2430).